The sequence spans 348 residues: Probable dual-specificity RNA methyltransferase RlmN (348 aa).

Glutamate 95 acts as the Proton acceptor in catalysis. The Radical SAM core domain maps to 101-335 (SGNRLTICVS…VSLRASRGLD (235 aa)). A disulfide bridge links cysteine 108 with cysteine 340. 3 residues coordinate [4Fe-4S] cluster: cysteine 115, cysteine 119, and cysteine 122. Residues 162–163 (GE), serine 192, 221–223 (SLH), and asparagine 297 each bind S-adenosyl-L-methionine. The active-site S-methylcysteine intermediate is the cysteine 340.

Belongs to the radical SAM superfamily. RlmN family. [4Fe-4S] cluster serves as cofactor.

It localises to the cytoplasm. The catalysed reaction is adenosine(2503) in 23S rRNA + 2 reduced [2Fe-2S]-[ferredoxin] + 2 S-adenosyl-L-methionine = 2-methyladenosine(2503) in 23S rRNA + 5'-deoxyadenosine + L-methionine + 2 oxidized [2Fe-2S]-[ferredoxin] + S-adenosyl-L-homocysteine. It catalyses the reaction adenosine(37) in tRNA + 2 reduced [2Fe-2S]-[ferredoxin] + 2 S-adenosyl-L-methionine = 2-methyladenosine(37) in tRNA + 5'-deoxyadenosine + L-methionine + 2 oxidized [2Fe-2S]-[ferredoxin] + S-adenosyl-L-homocysteine. Functionally, specifically methylates position 2 of adenine 2503 in 23S rRNA and position 2 of adenine 37 in tRNAs. This is Probable dual-specificity RNA methyltransferase RlmN from Prochlorococcus marinus (strain SARG / CCMP1375 / SS120).